We begin with the raw amino-acid sequence, 348 residues long: Dihydroorotate dehydrogenase (quinone) (348 aa).

Residues Ala65 to Lys69 and Thr89 each bind FMN. Residue Lys69 participates in substrate binding. Asn114–Phe118 contributes to the substrate binding site. FMN contacts are provided by Asn147 and Asn180. Position 180 (Asn180) interacts with substrate. The active-site Nucleophile is Ser183. Asn185 lines the substrate pocket. Lys225 and Thr253 together coordinate FMN. A substrate-binding site is contributed by Asn254–Thr255. FMN contacts are provided by residues Gly276, Gly305, and Tyr326 to Ser327.

The protein belongs to the dihydroorotate dehydrogenase family. Type 2 subfamily. In terms of assembly, monomer. Requires FMN as cofactor.

Its subcellular location is the cell membrane. It catalyses the reaction (S)-dihydroorotate + a quinone = orotate + a quinol. Its pathway is pyrimidine metabolism; UMP biosynthesis via de novo pathway; orotate from (S)-dihydroorotate (quinone route): step 1/1. Catalyzes the conversion of dihydroorotate to orotate with quinone as electron acceptor. The sequence is that of Dihydroorotate dehydrogenase (quinone) from Delftia acidovorans (strain DSM 14801 / SPH-1).